We begin with the raw amino-acid sequence, 239 residues long: MPIKKPCLKLNLDSLNVVRSEIPQMLSANERLKNNFNILYNQIRQYPAYYFKVASNVPNYSDICQFFSVMYQGFQIVNHSGDVFIHACRENPQSKGDFVGDKFHISIAREQVPLAFQILSGLLFSEDSPIDKWKITDMNRVSQQSRVGIGAQFTLYVKSDQECSQYSALLLHKIRQFIMCLESNLLRSKIAPGEYPASDVRPEDWKYVSYRNELRSDRDGSERQEQMLREEPFYRLMIE.

Catalysis depends on histidine 104, which acts as the Proton donor. The active-site Proton acceptor is the lysine 134.

The protein belongs to the phosphothreonine lyase family.

The protein resides in the secreted. Catalyzes the removal of the phosphate group from the phosphothreonine in the mitogen-activated protein kinases such as MAPK2/ERK2, MAPK3/ERK1, MAPK8 and MAPK14 in an irreversible reaction, thus preventing the downstream phosphorylation of histone H3. This epigenetic modification results in inhibition of the transcription of a specific subset of pro-inflammatory genes, and ultimately to a reduced immune response against the invading pathogen. The diminished immune response enhances the bacterium's ability to disseminate and multiply within the host. The protein is Phosphothreonine lyase OspF (ospF) of Shigella sonnei (strain Ss046).